The following is a 500-amino-acid chain: Glycerol kinase (500 aa).

T11 is a binding site for ADP. ATP-binding residues include T11, T12, and S13. Residue T11 participates in sn-glycerol 3-phosphate binding. R15 lines the ADP pocket. R81, E82, Y133, and D242 together coordinate sn-glycerol 3-phosphate. 5 residues coordinate glycerol: R81, E82, Y133, D242, and Q243. The ADP site is built by T264 and G307. Residues T264, G307, Q311, and G411 each coordinate ATP. G411 is an ADP binding site.

The protein belongs to the FGGY kinase family.

It catalyses the reaction glycerol + ATP = sn-glycerol 3-phosphate + ADP + H(+). The protein operates within polyol metabolism; glycerol degradation via glycerol kinase pathway; sn-glycerol 3-phosphate from glycerol: step 1/1. Inhibited by fructose 1,6-bisphosphate (FBP). Key enzyme in the regulation of glycerol uptake and metabolism. Catalyzes the phosphorylation of glycerol to yield sn-glycerol 3-phosphate. In Bradyrhizobium diazoefficiens (strain JCM 10833 / BCRC 13528 / IAM 13628 / NBRC 14792 / USDA 110), this protein is Glycerol kinase.